The chain runs to 219 residues: Non-specific lipid transfer protein GPI-anchored 25 (219 aa).

Residues 1-22 form the signal peptide; sequence MATKITGVFILILTITFSSSSA. Cystine bridges form between C39/C85, C49/C68, C69/C110, and C83/C123. N59 is a glycosylation site (N-linked (GlcNAc...) asparagine). An N-linked (GlcNAc...) asparagine glycan is attached at N148. The segment at 152-181 is disordered; sequence SPQSVDLAPEVSPSSDLFSPETATLAPPPP. S192 is lipidated: GPI-anchor amidated serine. The propeptide at 193–219 is removed in mature form; the sequence is SDSLKIRNFWFPSTIIMTFATSILARI.

This sequence belongs to the plant LTP family.

It localises to the cell membrane. Its function is as follows. Probable lipid transfer protein. The sequence is that of Non-specific lipid transfer protein GPI-anchored 25 from Arabidopsis thaliana (Mouse-ear cress).